A 269-amino-acid chain; its full sequence is tRNA (guanine-N(1)-)-methyltransferase (269 aa).

Residues glycine 115 and 139 to 144 (LGDYVL) each bind S-adenosyl-L-methionine.

It belongs to the RNA methyltransferase TrmD family. In terms of assembly, homodimer.

The protein resides in the cytoplasm. The catalysed reaction is guanosine(37) in tRNA + S-adenosyl-L-methionine = N(1)-methylguanosine(37) in tRNA + S-adenosyl-L-homocysteine + H(+). Specifically methylates guanosine-37 in various tRNAs. The protein is tRNA (guanine-N(1)-)-methyltransferase of Pseudarthrobacter chlorophenolicus (strain ATCC 700700 / DSM 12829 / CIP 107037 / JCM 12360 / KCTC 9906 / NCIMB 13794 / A6) (Arthrobacter chlorophenolicus).